A 221-amino-acid polypeptide reads, in one-letter code: Probable septum site-determining protein MinC (221 aa).

The protein belongs to the MinC family. As to quaternary structure, interacts with MinD and FtsZ.

Functionally, cell division inhibitor that blocks the formation of polar Z ring septums. Rapidly oscillates between the poles of the cell to destabilize FtsZ filaments that have formed before they mature into polar Z rings. Prevents FtsZ polymerization. The protein is Probable septum site-determining protein MinC of Aliivibrio fischeri (strain ATCC 700601 / ES114) (Vibrio fischeri).